A 172-amino-acid chain; its full sequence is Cytochrome c oxidase subunit 4 isoform 2, mitochondrial (172 aa).

Residues 1–18 (MFSRATRSLVMKTGGLRT) constitute a mitochondrion transit peptide. The tract at residues 1–33 (MFSRATRSLVMKTGGLRTQGTHSPGSAASSSQR) is disordered. Residues 16–33 (LRTQGTHSPGSAASSSQR) show a composition bias toward polar residues. The Mitochondrial matrix segment spans residues 19-101 (QGTHSPGSAA…TFAEMNHRSN (83 aa)). Residues 102–127 (EWKTVMGCVFFFIGFTALVIWWQRVY) traverse the membrane as a helical segment. The Mitochondrial intermembrane segment spans residues 128-172 (VFPKKVVTLTEERKAQQLQRLLDMKSNPIQGLSAHWDYEKKEWKK).

The protein belongs to the cytochrome c oxidase IV family. In terms of assembly, component of the cytochrome c oxidase (complex IV, CIV), a multisubunit enzyme composed of 14 subunits. The complex is composed of a catalytic core of 3 subunits MT-CO1, MT-CO2 and MT-CO3, encoded in the mitochondrial DNA, and 11 supernumerary subunits COX4I, COX5A, COX5B, COX6A, COX6B, COX6C, COX7A, COX7B, COX7C, COX8 and NDUFA4, which are encoded in the nuclear genome. The complex exists as a monomer or a dimer and forms supercomplexes (SCs) in the inner mitochondrial membrane with NADH-ubiquinone oxidoreductase (complex I, CI) and ubiquinol-cytochrome c oxidoreductase (cytochrome b-c1 complex, complex III, CIII), resulting in different assemblies (supercomplex SCI(1)III(2)IV(1) and megacomplex MCI(2)III(2)IV(2)). In terms of tissue distribution, highly expressed in lung.

It is found in the mitochondrion inner membrane. Its pathway is energy metabolism; oxidative phosphorylation. Component of the cytochrome c oxidase, the last enzyme in the mitochondrial electron transport chain which drives oxidative phosphorylation. The respiratory chain contains 3 multisubunit complexes succinate dehydrogenase (complex II, CII), ubiquinol-cytochrome c oxidoreductase (cytochrome b-c1 complex, complex III, CIII) and cytochrome c oxidase (complex IV, CIV), that cooperate to transfer electrons derived from NADH and succinate to molecular oxygen, creating an electrochemical gradient over the inner membrane that drives transmembrane transport and the ATP synthase. Cytochrome c oxidase is the component of the respiratory chain that catalyzes the reduction of oxygen to water. Electrons originating from reduced cytochrome c in the intermembrane space (IMS) are transferred via the dinuclear copper A center (CU(A)) of subunit 2 and heme A of subunit 1 to the active site in subunit 1, a binuclear center (BNC) formed by heme A3 and copper B (CU(B)). The BNC reduces molecular oxygen to 2 water molecules using 4 electrons from cytochrome c in the IMS and 4 protons from the mitochondrial matrix. This Rattus norvegicus (Rat) protein is Cytochrome c oxidase subunit 4 isoform 2, mitochondrial (Cox4i2).